We begin with the raw amino-acid sequence, 325 residues long: NADH-quinone oxidoreductase subunit H (325 aa).

A run of 8 helical transmembrane segments spans residues 11-31, 81-101, 114-134, 154-174, 186-206, 237-257, 265-285, and 304-324; these read ILLTVLKAVVILLVVVTCGAF, FIFTIAPVIAFSSLLLSFAIV, IGILFFLMVAGLAVYAVLFAG, VSYEVFLGLSILGVVAQAGSF, MWNIIPQFFGFITFAIAGVAV, FFVGEYIGIVAVSGLIVTLFF, LPSFVWFALKTGFFMMMFILI, and ICLPLTLINLLVTAAVILYNA.

The protein belongs to the complex I subunit 1 family. In terms of assembly, NDH-1 is composed of 13 different subunits. Subunits NuoA, H, J, K, L, M, N constitute the membrane sector of the complex.

It localises to the cell inner membrane. It carries out the reaction a quinone + NADH + 5 H(+)(in) = a quinol + NAD(+) + 4 H(+)(out). In terms of biological role, NDH-1 shuttles electrons from NADH, via FMN and iron-sulfur (Fe-S) centers, to quinones in the respiratory chain. The immediate electron acceptor for the enzyme in this species is believed to be ubiquinone. Couples the redox reaction to proton translocation (for every two electrons transferred, four hydrogen ions are translocated across the cytoplasmic membrane), and thus conserves the redox energy in a proton gradient. This subunit may bind ubiquinone. The protein is NADH-quinone oxidoreductase subunit H of Proteus mirabilis (strain HI4320).